We begin with the raw amino-acid sequence, 101 residues long: Secreted enzymes activator (101 aa).

Residues 1–10 (MSRRRRRASA) show a composition bias toward basic residues. 2 disordered regions span residues 1–26 (MSRRRRRASATRRSAAVSPPHTPYGS) and 45–101 (TRLA…NGRG). A compositionally biased stretch (low complexity) spans 45 to 60 (TRLAASSRASRAAVGS). Positions 55–74 (RAAVGSFDGAKNRPASSRRQ) form a DNA-binding region, H-T-H motif.

In terms of biological role, increases the production of several extracellular enzymes, like alkaline phosphatase, amylase, protease or lipase. When present in high concentrations, delays the production of pigments and sporulation. The chain is Secreted enzymes activator (saf) from Streptomyces griseus.